The following is a 148-amino-acid chain: Extracellular globin-2B (148 aa).

A Globin domain is found at 3 to 148 (CCSAADRHEV…IADVIKAELP (146 aa)). Cys-4 and Cys-135 form a disulfide bridge. His-98 is a binding site for heme b.

This sequence belongs to the globin family. As to quaternary structure, disulfide bonded trimer of chains IIA, IIB, and IIC.

Its subcellular location is the secreted. The protein is Extracellular globin-2B of Tylorrhynchus heterochetus (Japanese palolo worm).